The sequence spans 502 residues: Neuronal acetylcholine receptor subunit alpha-7 (502 aa).

An N-terminal signal peptide occupies residues 1–22 (MCGRRGGIWLALAAALLHVSLQ). Topologically, residues 23–233 (GEFQRRLYKE…VTMRRRTLYY (211 aa)) are extracellular. Ca(2+) contacts are provided by R42 and V44. N-linked (GlcNAc...) asparagine glycosylation is found at N46, N90, and N133. Residues C150 and C164 are joined by a disulfide bond. Residues S172 and Y210 each contribute to the Ca(2+) site. C212 and C213 are disulfide-bonded. 3 helical membrane-spanning segments follow: residues 234 to 254 (GLNLLIPCVLISALALLVFLL), 262 to 282 (ISLGITVLLSLTVFMLLVAEI), and 295 to 315 (QYFASTMIIVGLSVVVTVIVL). The tract at residues 260-267 (EKISLGIT) is essential for TMEM35A/NACHO-mediated proper subunit assembly and trafficking to cell membrane. Over 316–469 (RYHHHDPDGG…WKFAACVVDR (154 aa)) the chain is Cytoplasmic. Residues 470-490 (LCLMAFSVFTIICTIGILMSA) traverse the membrane as a helical segment.

Belongs to the ligand-gated ion channel (TC 1.A.9) family. Acetylcholine receptor (TC 1.A.9.1) subfamily. Alpha-7/CHRNA7 sub-subfamily. Homopentamer. Can also form heteropentamers with CHRNB2, mainly found in basal forebrain cholinergic neurons. Interacts with RIC3; which is required for proper folding and assembly. Interacts with LYPD6. Interacts with CANX. Post-translationally, glycosylations at Asn-46, Asn-90 and Asn-133 are essential for TMEM35A/NACHO-mediated proper subunit assembly and trafficking to the cell membrane. In terms of tissue distribution, higly expressed in brain. ALso expressed in immune cells sucha as macrophages.

The protein resides in the postsynaptic cell membrane. It localises to the cell membrane. The enzyme catalyses K(+)(in) = K(+)(out). The catalysed reaction is Na(+)(in) = Na(+)(out). It carries out the reaction Ca(2+)(in) = Ca(2+)(out). It catalyses the reaction choline(out) = choline(in). The enzyme catalyses NH4(+)(in) = NH4(+)(out). The catalysed reaction is L-arginine(in) = L-arginine(out). It carries out the reaction guanidine(out) = guanidine(in). Activated by a myriad of ligands such as acetylcholine, cytisine, nicotine, choline and epibatidine. Oligomeric amyloid-beta protein 42 activates specifially CHRNA7:CHRNB2 nAchRs. Activity is modulated by positive allosteric modulators (PAMs), such as flavonoids, with a wide range of chemical diversity, pharmacological sensitivity and efficacy. AChR activity is inhibited by the antagonists alpha-conotoxons RgIA, ImI and ImII, small disulfide-constrained peptides from cone snails. Component of neuronal acetylcholine receptors (nAChRs) that function as pentameric, ligand-gated cation channels with high calcium permeability among other activities. nAChRs are excitatory neurotrasnmitter receptors formed by a collection of nAChR subunits known to mediate synaptic transmission in the nervous system and the neuromuscular junction. Each nAchR subunit confers differential attributes to channel properties, including activation, deactivation and desensitization kinetics, pH sensitivity, cation permeability, and binding to allosteric modulators. CHRNA7 forms homopentameric neuronal acetylcholine receptors abundantly expressed in the central nervous system, characterized by fast desensitization and high calcium permeability. Also forms heteropentamers with CHRNB2, mainly expressed in basal forebrain cholinergic neurons. Involved in the modulation of calcium-dependent signaling pathways and influences the release of neurotransmitters, including dopamine, glutamate and GABA. Involved in the modulation of calcium-dependent signaling pathways and influences the release of neurotransmitters, including dopamine, glutamate and GABA. Also expressed in non-neuronal cells such as immune cells like lymphocytes, monocytes and macrophages. In T cells, activation induces metabotropic signaling that results in an increase of intracellular Ca2+ concentrations, independent of ionotropic receptor functions. In macrophages, required for acetylcholine-mediated inhibition of TNF and other inflammatory cytokine release. Once activated by acetylcholine, nicotine or other agonists, selectively inhibits production of pro-inflammatory cytokines while leaving anti-inflammatory cytokines undisturbed. Stimulates the cholinergic anti-inflammatory pathway, controlling inflammation by inhibiting NFKB nuclear translocation and activating the JAK2-STAT3 pathway, independently of ion channel activity. Also expressed in the urothelium where it modulates reflex bladder activity by increasing intracellular calcium through internal stores and decreasing basal ATP release. This Mus musculus (Mouse) protein is Neuronal acetylcholine receptor subunit alpha-7 (Chrna7).